Here is a 324-residue protein sequence, read N- to C-terminus: Alkanal monooxygenase beta chain (324 aa).

The protein belongs to the bacterial luciferase oxidoreductase family. In terms of assembly, heterodimer of an alpha and a beta chain.

The enzyme catalyses a long-chain fatty aldehyde + FMNH2 + O2 = a long-chain fatty acid + hnu + FMN + H2O + 2 H(+). Functionally, light-emitting reaction in luminous bacteria. The specific role of the beta subunit is unknown, but it is absolutely required for bioluminescence activity. The protein is Alkanal monooxygenase beta chain (luxB) of Photorhabdus luminescens (Xenorhabdus luminescens).